The following is a 167-amino-acid chain: SsrA-binding protein (167 aa).

Residues 139–158 are compositionally biased toward basic and acidic residues; that stretch reads QNHDKRDAAKDRDWQRDKQR. The disordered stretch occupies residues 139–167; it reads QNHDKRDAAKDRDWQRDKQRVMRRHNRDA.

Belongs to the SmpB family.

It localises to the cytoplasm. Functionally, required for rescue of stalled ribosomes mediated by trans-translation. Binds to transfer-messenger RNA (tmRNA), required for stable association of tmRNA with ribosomes. tmRNA and SmpB together mimic tRNA shape, replacing the anticodon stem-loop with SmpB. tmRNA is encoded by the ssrA gene; the 2 termini fold to resemble tRNA(Ala) and it encodes a 'tag peptide', a short internal open reading frame. During trans-translation Ala-aminoacylated tmRNA acts like a tRNA, entering the A-site of stalled ribosomes, displacing the stalled mRNA. The ribosome then switches to translate the ORF on the tmRNA; the nascent peptide is terminated with the 'tag peptide' encoded by the tmRNA and targeted for degradation. The ribosome is freed to recommence translation, which seems to be the essential function of trans-translation. This is SsrA-binding protein from Xanthomonas axonopodis pv. citri (strain 306).